Consider the following 124-residue polypeptide: Small ribosomal subunit protein uS12 (124 aa).

D89 carries the 3-methylthioaspartic acid modification.

This sequence belongs to the universal ribosomal protein uS12 family. As to quaternary structure, part of the 30S ribosomal subunit. Contacts proteins S8 and S17. May interact with IF1 in the 30S initiation complex.

Its function is as follows. With S4 and S5 plays an important role in translational accuracy. Functionally, interacts with and stabilizes bases of the 16S rRNA that are involved in tRNA selection in the A site and with the mRNA backbone. Located at the interface of the 30S and 50S subunits, it traverses the body of the 30S subunit contacting proteins on the other side and probably holding the rRNA structure together. The combined cluster of proteins S8, S12 and S17 appears to hold together the shoulder and platform of the 30S subunit. The chain is Small ribosomal subunit protein uS12 from Buchnera aphidicola subsp. Schizaphis graminum (strain Sg).